A 404-amino-acid chain; its full sequence is Argininosuccinate synthase (404 aa).

ATP contacts are provided by residues 10–18 and Ala-37; that span reads AYSGGLDTS. The L-citrulline site is built by Tyr-90 and Ser-95. Gly-120 serves as a coordination point for ATP. 3 residues coordinate L-aspartate: Thr-122, Asn-126, and Asp-127. Residue Asn-126 participates in L-citrulline binding. L-citrulline is bound by residues Arg-130, Ser-181, Ser-190, Glu-266, and Tyr-278. The disordered stretch occupies residues 173–200; that stretch reads DKRGESPFSTDANLLHTSSEGKVLEDPW. Residues 179–192 show a composition bias toward polar residues; sequence PFSTDANLLHTSSE.

It belongs to the argininosuccinate synthase family. Type 1 subfamily. As to quaternary structure, homotetramer.

The protein resides in the cytoplasm. It carries out the reaction L-citrulline + L-aspartate + ATP = 2-(N(omega)-L-arginino)succinate + AMP + diphosphate + H(+). It participates in amino-acid biosynthesis; L-arginine biosynthesis; L-arginine from L-ornithine and carbamoyl phosphate: step 2/3. In Novosphingobium aromaticivorans (strain ATCC 700278 / DSM 12444 / CCUG 56034 / CIP 105152 / NBRC 16084 / F199), this protein is Argininosuccinate synthase.